Here is a 482-residue protein sequence, read N- to C-terminus: Nuclear transcription factor Y subunit nfya-1 (482 aa).

The disordered stretch occupies residues 1 to 160; that stretch reads MNGASRGDVQ…NGSYIQYNEP (160 aa). Positions 72–93 are enriched in polar residues; the sequence is SSPNVQTQCHQPPVVRSQTHQA. The span at 94–110 shows a compositional bias: low complexity; it reads SVSQTTPTQTTPSQYTP. Composition is skewed to polar residues over residues 126-135 and 144-160; these read HVTPSQQQRI and VSQS…YNEP. The short motif at 306 to 329 is the Subunit association domain (SAD) element; that stretch reads LVNPKQFNRIMRRREMRQQLEASG. The segment at residues 336 to 361 is a DNA-binding region (NFYA/HAP2-type); that stretch reads QKYLHESRHLHALKRKRGLDGRFDNT. The segment at 344–414 is disordered; the sequence is HLHALKRKRG…QPKGGIVNSS (71 aa). Residues 353-362 show a composition bias toward basic and acidic residues; that stretch reads GLDGRFDNTK. Positions 363–375 are enriched in low complexity; sequence TAESSSMVSSTTS.

This sequence belongs to the NFYA/HAP2 subunit family. As to quaternary structure, forms a heterotrimeric transcription factor complex (nfya-1-NF-Y complex) composed of nfya-1, nfyb-1 and nfyc-1, which binds to 5'-CCAAT-3' box motif in the promoters of its target genes. Interacts with the nfyb-1 and nfyc-1 dimer; the interaction is required for subsequent binding to the 5'-CCAAT-3' box motif in DNA. Does not interact with either nfyb-1 or nfyc-1 in their monomeric form. Interacts with mes-3. Expressed in certain parts of the gonads with high expression in fertilized oocytes in the uterus and mature oocytes from the distal to the proximal arm of the gonad, but weak expression in the syncytial ovaries and immature oocytes at the beginning of the proximal arm of the gonad. Highly expressed in the head ganglia neurons and the developing hermaphrodite vulva and male tail. Weakly expressed in most somatic cells. Not expressed in the intestine, the hypodermis, body wall muscle surrounding the pseudocoelomic space, secretory cells in the pharyngeal terminal bulb wall, in the small ganglia surrounding the pharynx and in the neurons running anteriorly to the sensory organs in the head.

The protein resides in the nucleus. In terms of biological role, component of the sequence-specific heterotrimeric transcription factor (nfya-1-NF-Y) which specifically recognizes a 5'-CCAAT-3' box motif found in the promoters of its target genes to regulate their expression and control cellular identity in particular tissue types. In association with the components in the nfya-1-NF-Y complex, represses the expression of the T-box transcription factor tbx-2 throughout larval development, which most likely restricts its expression to certain tissues. May act to repress txb-2 expression in conjunction with tbx-2 itself, which has an autoregulatory role. With the components in this complex, negatively regulates the expression of the homeobox protein egl-5 to spatially restrict its expression in tissues such as the head. May regulate egl-5 expression in association with the mes-2-mes-3-mes-6 complex. The polypeptide is Nuclear transcription factor Y subunit nfya-1 (Caenorhabditis elegans).